The sequence spans 248 residues: Probable transcriptional regulatory protein Nham_3525 (248 aa).

The disordered stretch occupies residues methionine 1–lysine 21.

The protein belongs to the TACO1 family.

The protein resides in the cytoplasm. This is Probable transcriptional regulatory protein Nham_3525 from Nitrobacter hamburgensis (strain DSM 10229 / NCIMB 13809 / X14).